The primary structure comprises 665 residues: Protein Fe65 homolog (665 aa).

Positions 1–12 are enriched in basic and acidic residues; it reads MREGTPRVRIEV. Disordered stretches follow at residues 1–43 and 90–111; these read MREG…DTAT and SRGY…RRRN. A compositionally biased stretch (polar residues) spans 14–24; the sequence is KGSNRPSQFVS. 2 stretches are compositionally biased toward basic and acidic residues: residues 27-40 and 102-111; these read EEQR…RDSD and GRREEERRRN. Residues 233–266 enclose the WW domain; the sequence is KDLPPGWEKHEDPQGYSYYWHVDSGTIQRQPPPP. PID domains follow at residues 330-456 and 499-615; these read VRFA…RDIC and FLGV…VLDA.

In terms of assembly, interacts (via PID 2 domain) with apl-1 (via cytoplasmic domain). Post-translationally, phosphorylated. As to expression, expressed in the pharynx (including pharyngeal muscle and nerve cells), ventral nerve cord and tail neurons.

It is found in the cytoplasm. It localises to the cytoskeleton. Its function is as follows. Modulates pharyngeal pumping activity, at least in part by regulating expression of the acetylcholinesterase genes ace-1 and ace-2. The sequence is that of Protein Fe65 homolog from Caenorhabditis elegans.